We begin with the raw amino-acid sequence, 484 residues long: Phosphomethylpyrimidine synthase (484 aa).

Substrate is bound by residues asparagine 97, methionine 126, tyrosine 156, histidine 192, 212–214 (SRG), 253–256 (DSLR), and glutamate 292. A Zn(2+)-binding site is contributed by histidine 296. Position 319 (tyrosine 319) interacts with substrate. Histidine 360 lines the Zn(2+) pocket. Positions 440, 443, and 448 each coordinate [4Fe-4S] cluster.

The protein belongs to the ThiC family. Requires [4Fe-4S] cluster as cofactor.

The catalysed reaction is 5-amino-1-(5-phospho-beta-D-ribosyl)imidazole + S-adenosyl-L-methionine = 4-amino-2-methyl-5-(phosphooxymethyl)pyrimidine + CO + 5'-deoxyadenosine + formate + L-methionine + 3 H(+). It participates in cofactor biosynthesis; thiamine diphosphate biosynthesis. Catalyzes the synthesis of the hydroxymethylpyrimidine phosphate (HMP-P) moiety of thiamine from aminoimidazole ribotide (AIR) in a radical S-adenosyl-L-methionine (SAM)-dependent reaction. The polypeptide is Phosphomethylpyrimidine synthase (Synechococcus sp. (strain CC9605)).